Consider the following 94-residue polypeptide: MFGLINIGFGNVIAGDRIVAIVNPESAPLKRLKEDAKEEGKLIDATYGRKTRAILISDSNHIILSAIQPETIAQRFMQSFFEIEEQLERIRRKG.

The protein belongs to the RemA family.

The protein is Putative regulatory protein Tmel_0100 of Thermosipho melanesiensis (strain DSM 12029 / CIP 104789 / BI429).